The sequence spans 197 residues: MEVSMDLIKKLREMTGAGVLDCKKALEESEGDIEKAVEILRKKGAATAEKKAGRATKEGIIVAYVHFNGRIGVLLEMNCETDFVARTDEFKELAYNLAKQVAAMKPRYVRREDVPEEVIEKEKEIYRAQIKDKPEHVIEKIVEGKLEKFFEQACLYEQTYIFDDSKKVKDLINELIAKTGENIRVSRFTRYEVGEEG.

Residues T81–V84 are involved in Mg(2+) ion dislocation from EF-Tu.

It belongs to the EF-Ts family.

Its subcellular location is the cytoplasm. Functionally, associates with the EF-Tu.GDP complex and induces the exchange of GDP to GTP. It remains bound to the aminoacyl-tRNA.EF-Tu.GTP complex up to the GTP hydrolysis stage on the ribosome. This chain is Elongation factor Ts, found in Thermotoga neapolitana (strain ATCC 49049 / DSM 4359 / NBRC 107923 / NS-E).